The following is a 331-amino-acid chain: Thiamine thiazole synthase (331 aa).

Residues Cys-86, 107-108 (EA), Gly-115, and Val-183 contribute to the substrate site. A 2,3-didehydroalanine (Cys) modification is found at Cys-220. Residues Asp-222, His-237, Met-289, and 299 to 301 (RMG) each bind substrate.

Belongs to the THI4 family. Homooctamer. The cofactor is Fe cation. Post-translationally, during the catalytic reaction, a sulfide is transferred from Cys-220 to a reaction intermediate, generating a dehydroalanine residue.

The protein resides in the cytoplasm. It is found in the nucleus. The catalysed reaction is [ADP-thiazole synthase]-L-cysteine + glycine + NAD(+) = [ADP-thiazole synthase]-dehydroalanine + ADP-5-ethyl-4-methylthiazole-2-carboxylate + nicotinamide + 3 H2O + 2 H(+). Involved in biosynthesis of the thiamine precursor thiazole. Catalyzes the conversion of NAD and glycine to adenosine diphosphate 5-(2-hydroxyethyl)-4-methylthiazole-2-carboxylic acid (ADT), an adenylated thiazole intermediate. The reaction includes an iron-dependent sulfide transfer from a conserved cysteine residue of the protein to a thiazole intermediate. The enzyme can only undergo a single turnover, which suggests it is a suicide enzyme. May have additional roles in adaptation to various stress conditions and in DNA damage tolerance. The protein is Thiamine thiazole synthase of Emericella nidulans (strain FGSC A4 / ATCC 38163 / CBS 112.46 / NRRL 194 / M139) (Aspergillus nidulans).